The sequence spans 275 residues: Elongation factor Ts (275 aa).

The tract at residues 76–79 is involved in Mg(2+) ion dislocation from EF-Tu; sequence TDFV.

The protein belongs to the EF-Ts family.

It is found in the cytoplasm. Its function is as follows. Associates with the EF-Tu.GDP complex and induces the exchange of GDP to GTP. It remains bound to the aminoacyl-tRNA.EF-Tu.GTP complex up to the GTP hydrolysis stage on the ribosome. This Mycobacterium avium (strain 104) protein is Elongation factor Ts.